A 614-amino-acid polypeptide reads, in one-letter code: UvrABC system protein C (614 aa).

Residues 19–97 form the GIY-YIG domain; the sequence is SLPGCYLWKN…IKKYNPKFNV (79 aa). The 36-residue stretch at 208–243 folds into the UVR domain; that stretch reads ERLVADLKKAMMDASSKMEYERAGFLKQRIEKINQL.

Belongs to the UvrC family. As to quaternary structure, interacts with UvrB in an incision complex.

The protein resides in the cytoplasm. In terms of biological role, the UvrABC repair system catalyzes the recognition and processing of DNA lesions. UvrC both incises the 5' and 3' sides of the lesion. The N-terminal half is responsible for the 3' incision and the C-terminal half is responsible for the 5' incision. The sequence is that of UvrABC system protein C from Leptospira biflexa serovar Patoc (strain Patoc 1 / Ames).